The sequence spans 423 residues: Methylenetetrahydrofolate--tRNA-(uracil-5-)-methyltransferase TrmFO 2 (423 aa).

8–13 (GAGLSG) serves as a coordination point for FAD.

The protein belongs to the MnmG family. TrmFO subfamily. The cofactor is FAD.

It localises to the cytoplasm. The catalysed reaction is uridine(54) in tRNA + (6R)-5,10-methylene-5,6,7,8-tetrahydrofolate + NADH + H(+) = 5-methyluridine(54) in tRNA + (6S)-5,6,7,8-tetrahydrofolate + NAD(+). The enzyme catalyses uridine(54) in tRNA + (6R)-5,10-methylene-5,6,7,8-tetrahydrofolate + NADPH + H(+) = 5-methyluridine(54) in tRNA + (6S)-5,6,7,8-tetrahydrofolate + NADP(+). In terms of biological role, catalyzes the folate-dependent formation of 5-methyl-uridine at position 54 (M-5-U54) in all tRNAs. This chain is Methylenetetrahydrofolate--tRNA-(uracil-5-)-methyltransferase TrmFO 2, found in Mycoplasma capricolum subsp. capricolum (strain California kid / ATCC 27343 / NCTC 10154).